A 93-amino-acid polypeptide reads, in one-letter code: Ribonuclease P protein component 1 (93 aa).

This sequence belongs to the eukaryotic/archaeal RNase P protein component 1 family. Consists of a catalytic RNA component and at least 4-5 protein subunits.

The protein localises to the cytoplasm. It carries out the reaction Endonucleolytic cleavage of RNA, removing 5'-extranucleotides from tRNA precursor.. Functionally, part of ribonuclease P, a protein complex that generates mature tRNA molecules by cleaving their 5'-ends. The protein is Ribonuclease P protein component 1 of Methanothermobacter thermautotrophicus (strain ATCC 29096 / DSM 1053 / JCM 10044 / NBRC 100330 / Delta H) (Methanobacterium thermoautotrophicum).